A 574-amino-acid chain; its full sequence is Developmental and secondary metabolism regulator veA (574 aa).

4 disordered regions span residues 1-22 (MATRAPLAPPPNETEASVSRIT), 39-60 (ERARACGAGAKSSADRRPVDPP), 255-500 (RSSD…GAGK), and 513-548 (RSYEDSFGHDDRPLYNGMRPDTESHPRRLSDAGRNF). Residues 25 to 230 (GKKLTYKLNV…AEQGCRVRIR (206 aa)) enclose the Velvet domain. A Nuclear localization signal motif is present at residues 39–44 (ERARAC). Pro residues-rich tracts occupy residues 314 to 323 (RPMPPAPVPA) and 330 to 341 (PAPPAPPAPPSH). Composition is skewed to polar residues over residues 343–359 (PGYQSHLSFGSTQTQYP), 385–394 (HARNPSTSAE), 402–415 (YPSSRVSTERSSYP), and 448–458 (VAQSAGPRSQT). Positions 457–501 (QTPSSSLVPSLPPLKALSGDYPNNLSQPSSSISQSPSHDLGAGKK) are PEST. 2 stretches are compositionally biased toward low complexity: residues 459-474 (PSSSLVPSLPPLKALS) and 482-493 (SQPSSSISQSPS). Composition is skewed to basic and acidic residues over residues 513–525 (RSYEDSFGHDDRP) and 532–543 (PDTESHPRRLSD).

It belongs to the velvet family. VeA subfamily. As to quaternary structure, component of the heterotrimeric velvet complex composed of laeA, veA and velB; VeA acting as a bridging protein between laeA and velB.

The protein localises to the nucleus. It is found in the cytoplasm. Its function is as follows. Component of the velvet transcription factor complex that controls sexual/asexual developmental ratio in response to light, promoting sexual development in the darkness while stimulating asexual sporulation under illumination. The velvet complex hat acts as a global regulator for secondary metabolite gene expression. Controls the expression of the aflatoxin gene cluster. Required for the expression of aflR and aflJ. Mediates the coordination of aflatoxigenic vesicles (aflatoxisomes) development with aflatoxin gene expression. Regulates branched chain amino acid and ethanol metabolism and acts as a positive regulator of mitochondrial and peroxisomal beta-oxidation. The protein is Developmental and secondary metabolism regulator veA of Aspergillus parasiticus.